The primary structure comprises 368 residues: Apolipoprotein A-V (368 aa).

The signal sequence occupies residues 1–20; it reads MAAVITWALALLAVFASTQA. Ser-52 is subject to Phosphoserine. Residues 231–255 are a coiled coil; that stretch reads TRKAKDLHTSIQRNLDQLRDELSAF. The tract at residues 305 to 333 is disordered; the sequence is EEIQHQLAPPPPSHSAFAPELGHSDSNKA.

The protein belongs to the apolipoprotein A1/A4/E family. As to quaternary structure, interacts with GPIHBP1. Interacts with SORL1; this interaction leads to APOA5 internalization and sorting either to lysosomes and degradation, or to the trans-Golgi network. Post-translationally, phosphorylated by FAM20C in the extracellular medium. As to expression, liver.

The protein resides in the secreted. It localises to the early endosome. The protein localises to the late endosome. It is found in the golgi apparatus. Its subcellular location is the trans-Golgi network. Its function is as follows. Minor apolipoprotein mainly associated with HDL and to a lesser extent with VLDL. May also be associated with chylomicrons. Important determinant of plasma triglyceride (TG) levels by both being a potent stimulator of apo-CII lipoprotein lipase (LPL) TG hydrolysis and an inhibitor of the hepatic VLDL-TG production rate (without affecting the VLDL-apoB production rate). Activates poorly lecithin:cholesterol acyltransferase (LCAT) and does not enhance efflux of cholesterol from macrophages. Binds heparin. This is Apolipoprotein A-V (Apoa5) from Mus musculus (Mouse).